We begin with the raw amino-acid sequence, 258 residues long: Ciliogenesis and planar polarity effector 2 (258 aa).

Residues 50-258 form a small GTPase-like region; the sequence is SIDTASYKIF…LPNPPESAPE (209 aa). GTP-binding residues include serine 64, glycine 65, glycine 67, lysine 68, threonine 69, alanine 70, valine 82, histidine 84, threonine 87, lysine 176, aspartate 178, and serine 206.

Belongs to the small GTPase superfamily. Rab family. As to quaternary structure, interacts with FUZ. Associates with the CPLANE (ciliogenesis and planar polarity effectors) complex via its interaction with FUZ.

It localises to the cytoplasm. The protein resides in the cytoskeleton. The protein localises to the cilium basal body. Its subcellular location is the microtubule organizing center. It is found in the centrosome. It localises to the centriole. Functionally, required for efficient primary cilia initiation, regulating a late step in cilia initiation. Plays a role in the final maturation of the mother centriole and ciliary vesicle that allows extension of the ciliary axoneme. The polypeptide is Ciliogenesis and planar polarity effector 2 (Homo sapiens (Human)).